Consider the following 279-residue polypeptide: Acetyl-coenzyme A carboxylase carboxyl transferase subunit beta (279 aa).

Positions 23–279 (LWWKCEECGA…LVTLFSMLKV (257 aa)) constitute a CoA carboxyltransferase N-terminal domain. Zn(2+) contacts are provided by C27, C30, C46, and C49. The C4-type zinc-finger motif lies at 27-49 (CEECGAMLHKKQFEDHFFTCAEC).

The protein belongs to the AccD/PCCB family. In terms of assembly, acetyl-CoA carboxylase is a heterohexamer composed of biotin carboxyl carrier protein (AccB), biotin carboxylase (AccC) and two subunits each of ACCase subunit alpha (AccA) and ACCase subunit beta (AccD). Zn(2+) is required as a cofactor.

Its subcellular location is the cytoplasm. It catalyses the reaction N(6)-carboxybiotinyl-L-lysyl-[protein] + acetyl-CoA = N(6)-biotinyl-L-lysyl-[protein] + malonyl-CoA. Its pathway is lipid metabolism; malonyl-CoA biosynthesis; malonyl-CoA from acetyl-CoA: step 1/1. In terms of biological role, component of the acetyl coenzyme A carboxylase (ACC) complex. Biotin carboxylase (BC) catalyzes the carboxylation of biotin on its carrier protein (BCCP) and then the CO(2) group is transferred by the transcarboxylase to acetyl-CoA to form malonyl-CoA. The chain is Acetyl-coenzyme A carboxylase carboxyl transferase subunit beta from Pelodictyon phaeoclathratiforme (strain DSM 5477 / BU-1).